The primary structure comprises 289 residues: Phospholipase A1 (289 aa).

Residues 1 to 20 form the signal peptide; that stretch reads MRTGPGWLLAAAALPFFACA. The Periplasmic portion of the chain corresponds to 21 to 52; sequence QEATIDKVHDTPAVRGSIIANMLQEHDNPFTL. A beta stranded membrane pass occupies residues 53–65; sequence YPYESNYLLYTYT. The Extracellular segment spans residues 66–84; the sequence is SDLNKKAIESYNWSDNANK. A beta stranded transmembrane segment spans residues 85 to 99; the sequence is DEVKFQLSLAFPLWR. Over 100-105 the chain is Periplasmic; sequence GILGDN. The beta stranded transmembrane segment at 106–118 threads the bilayer; that stretch reads SLLGASYTQRSWW. Residues 119–128 lie on the Extracellular side of the membrane; it reads QLSNTGESAP. S126 lines the Ca(2+) pocket. Residues 129–148 traverse the membrane as a beta stranded segment; it reads FRETNYEPQLFLGFATDYSV. The Periplasmic segment spans residues 149–150; sequence GD. A beta stranded membrane pass occupies residues 151–164; it reads WTLRDAEFGYNHQS. The Proton acceptor role is filled by H162. Residue S164 is the Nucleophile of the active site. Residues 165 to 173 lie on the Extracellular side of the membrane; sequence NGRSDPTSR. Ca(2+) contacts are provided by R167 and S172. The beta stranded transmembrane segment at 174 to 186 threads the bilayer; sequence SWNRLYSRLMAQN. Residues 187–188 are Periplasmic-facing; it reads GN. A beta stranded transmembrane segment spans residues 189 to 198; that stretch reads WLVEVKPWYV. At 199–216 the chain is on the extracellular side; it reads IGDTSDNKNITKYMGYYQ. D204 is a Ca(2+) binding site. The beta stranded transmembrane segment at 217–223 threads the bilayer; that stretch reads LKIGYQL. The Periplasmic segment spans residues 224–225; that stretch reads GE. Residues 226–234 traverse the membrane as a beta stranded segment; the sequence is AVLSAKGQY. The Extracellular segment spans residues 235–241; sequence NWNTGYG. A beta stranded transmembrane segment spans residues 242–250; it reads GAELGVSYP. Topologically, residues 251–255 are periplasmic; it reads ITKHV. Residues 256 to 265 traverse the membrane as a beta stranded segment; sequence RFYTQVYSGY. Residues 266–274 are Extracellular-facing; that stretch reads GESLIDYDF. A beta stranded membrane pass occupies residues 275 to 286; the sequence is NQTRVGMGVMLN. The Periplasmic portion of the chain corresponds to 287–289; that stretch reads DLF.

The protein belongs to the phospholipase A1 family. In terms of assembly, homodimer; dimerization is reversible, and the dimeric form is the active one. The cofactor is Ca(2+).

The protein resides in the cell outer membrane. It catalyses the reaction a 1,2-diacyl-sn-glycero-3-phosphocholine + H2O = a 2-acyl-sn-glycero-3-phosphocholine + a fatty acid + H(+). It carries out the reaction a 1,2-diacyl-sn-glycero-3-phosphocholine + H2O = a 1-acyl-sn-glycero-3-phosphocholine + a fatty acid + H(+). In terms of biological role, hydrolysis of phosphatidylcholine with phospholipase A2 (EC 3.1.1.4) and phospholipase A1 (EC 3.1.1.32) activities. The sequence is that of Phospholipase A1 (pldA) from Proteus vulgaris.